The following is a 561-amino-acid chain: Phosphatidylinositol 4-kinase gamma 1 (561 aa).

Residues 121–416 (GAQPLLLPSG…SVFGKTSEDS (296 aa)) enclose the PI3K/PI4K catalytic domain. The tract at residues 127-133 (LPSGMGG) is G-loop. ATP-binding positions include 128–134 (PSGMGGA), Lys-149, and 233–236 (QRFV). Residues 266–274 (LNLDRHAGN) form a catalytic loop region. Positions 296–322 (PIDHGLCLPECLDDPYFEWLNWPQALV) are activation loop. Asp-298 contributes to the ATP binding site. Residues 456–520 (PPLVPRGPRA…PISPNHDESK (65 aa)) form a disordered region. A compositionally biased stretch (polar residues) spans 467–484 (TIPNDVTASMSSSQNQRI).

It belongs to the PI3/PI4-kinase family. Type II PI4K subfamily.

The enzyme catalyses a 1,2-diacyl-sn-glycero-3-phospho-(1D-myo-inositol) + ATP = a 1,2-diacyl-sn-glycero-3-phospho-(1D-myo-inositol 4-phosphate) + ADP + H(+). In terms of biological role, the phosphorylation of phosphatidylinositol (PI) to PI4P is the first committed step in the generation of phosphatidylinositol 4,5-bisphosphate (PIP2), a precursor of the second messenger inositol 1,4,5-trisphosphate (InsP3). The sequence is that of Phosphatidylinositol 4-kinase gamma 1 (PI4KG1) from Arabidopsis thaliana (Mouse-ear cress).